The chain runs to 110 residues: Large ribosomal subunit protein uL24 (110 aa).

It belongs to the universal ribosomal protein uL24 family. As to quaternary structure, part of the 50S ribosomal subunit.

Functionally, one of two assembly initiator proteins, it binds directly to the 5'-end of the 23S rRNA, where it nucleates assembly of the 50S subunit. In terms of biological role, one of the proteins that surrounds the polypeptide exit tunnel on the outside of the subunit. This Desulfovibrio desulfuricans (strain ATCC 27774 / DSM 6949 / MB) protein is Large ribosomal subunit protein uL24.